Consider the following 480-residue polypeptide: Ribulose bisphosphate carboxylase large chain (480 aa).

The propeptide occupies 1-2; that stretch reads MS. Position 3 is an N-acetylproline (proline 3). N6,N6,N6-trimethyllysine is present on lysine 14. The substrate site is built by asparagine 123 and threonine 173. The Proton acceptor role is filled by lysine 175. A substrate-binding site is contributed by lysine 177. 3 residues coordinate Mg(2+): lysine 201, aspartate 203, and glutamate 204. N6-carboxylysine is present on lysine 201. Histidine 294 acts as the Proton acceptor in catalysis. Substrate contacts are provided by arginine 295, histidine 327, and serine 379.

The protein belongs to the RuBisCO large chain family. Type I subfamily. Heterohexadecamer of 8 large chains and 8 small chains; disulfide-linked. The disulfide link is formed within the large subunit homodimers. It depends on Mg(2+) as a cofactor. In terms of processing, the disulfide bond which can form in the large chain dimeric partners within the hexadecamer appears to be associated with oxidative stress and protein turnover.

Its subcellular location is the plastid. The protein localises to the chloroplast. It carries out the reaction 2 (2R)-3-phosphoglycerate + 2 H(+) = D-ribulose 1,5-bisphosphate + CO2 + H2O. The catalysed reaction is D-ribulose 1,5-bisphosphate + O2 = 2-phosphoglycolate + (2R)-3-phosphoglycerate + 2 H(+). In terms of biological role, ruBisCO catalyzes two reactions: the carboxylation of D-ribulose 1,5-bisphosphate, the primary event in carbon dioxide fixation, as well as the oxidative fragmentation of the pentose substrate in the photorespiration process. Both reactions occur simultaneously and in competition at the same active site. This is Ribulose bisphosphate carboxylase large chain from Acorus calamus var. americanus (American sweet flag).